Reading from the N-terminus, the 234-residue chain is uncharacterized protein (234 aa).

Positions 5 to 234 constitute an ABC transporter domain; it reads MELVDVWKIY…ERRGVVYGDT (230 aa). ATP is bound at residue 41–48; the sequence is GPSGSGKS.

Belongs to the ABC transporter superfamily.

This is an uncharacterized protein from Thermotoga maritima (strain ATCC 43589 / DSM 3109 / JCM 10099 / NBRC 100826 / MSB8).